The following is a 347-amino-acid chain: MINSISNTVLLKSVVSKRFFSSSAKMSSQAKPRHLVSMLELSIKELESLVNRAAYHKQQIRSGLVNTTQPLSGKTVSLIFNKRSTRTRVSSEGAAAYLGGCPMFLGKDDIQLGVNESLHDTTKIISSMTSSIFARVNKHSDIQEMCKYSSVPIINALCDTFHPLQAITDILTIKESFGNTTKGLKLAWIGDVNNVINDLCIAALKSGIDVSIAVPSGLKFEELILSGAKEISAENGTTLKITNDPLEAINGANVIVTDTWISMGQEDERLQKLKQFEGFQITKEMISKGKAAENWKFMHCLPRHPEEVHDEVFYDEERSLVFEEGENRLYAAIAVLEGFVVNKGKLL.

The N-terminal 25 residues, 1–25 (MINSISNTVLLKSVVSKRFFSSSAK), are a transit peptide targeting the mitochondrion. Residues 84–87 (STRT), Arg-135, His-162, and Gln-165 each bind carbamoyl phosphate. L-ornithine-binding residues include Asn-194, Asp-258, Ser-262, and Met-263. The active-site Proton acceptor is Cys-300. Carbamoyl phosphate contacts are provided by residues 300–301 (CL) and Arg-328.

It belongs to the aspartate/ornithine carbamoyltransferase superfamily. OTCase family.

The protein resides in the mitochondrion matrix. It catalyses the reaction carbamoyl phosphate + L-ornithine = L-citrulline + phosphate + H(+). The protein operates within amino-acid biosynthesis; L-arginine biosynthesis; L-arginine from L-ornithine and carbamoyl phosphate: step 1/3. This chain is Ornithine transcarbamylase, mitochondrial (OTC), found in Pachysolen tannophilus (Yeast).